We begin with the raw amino-acid sequence, 469 residues long: tRNA-2-methylthio-N(6)-dimethylallyladenosine synthase (469 aa).

The region spanning 22–142 (RKVFIKTYGC…LPEALRRAQQ (121 aa)) is the MTTase N-terminal domain. The [4Fe-4S] cluster site is built by cysteine 31, cysteine 67, cysteine 105, cysteine 183, cysteine 187, and cysteine 190. In terms of domain architecture, Radical SAM core spans 169–401 (RARGVTAFLT…QALLLKQQQE (233 aa)). Residues 404–466 (ESCIGKEIDL…TNSLFAERAE (63 aa)) enclose the TRAM domain.

This sequence belongs to the methylthiotransferase family. MiaB subfamily. In terms of assembly, monomer. [4Fe-4S] cluster is required as a cofactor.

The protein localises to the cytoplasm. It carries out the reaction N(6)-dimethylallyladenosine(37) in tRNA + (sulfur carrier)-SH + AH2 + 2 S-adenosyl-L-methionine = 2-methylsulfanyl-N(6)-dimethylallyladenosine(37) in tRNA + (sulfur carrier)-H + 5'-deoxyadenosine + L-methionine + A + S-adenosyl-L-homocysteine + 2 H(+). Functionally, catalyzes the methylthiolation of N6-(dimethylallyl)adenosine (i(6)A), leading to the formation of 2-methylthio-N6-(dimethylallyl)adenosine (ms(2)i(6)A) at position 37 in tRNAs that read codons beginning with uridine. The chain is tRNA-2-methylthio-N(6)-dimethylallyladenosine synthase from Rhizobium etli (strain CIAT 652).